We begin with the raw amino-acid sequence, 185 residues long: Elongation factor P (185 aa).

The protein belongs to the elongation factor P family.

It is found in the cytoplasm. The protein operates within protein biosynthesis; polypeptide chain elongation. Involved in peptide bond synthesis. Stimulates efficient translation and peptide-bond synthesis on native or reconstituted 70S ribosomes in vitro. Probably functions indirectly by altering the affinity of the ribosome for aminoacyl-tRNA, thus increasing their reactivity as acceptors for peptidyl transferase. This Desulforudis audaxviator (strain MP104C) protein is Elongation factor P.